A 415-amino-acid polypeptide reads, in one-letter code: Tyrosine--tRNA ligase (415 aa).

A 'HIGH' region motif is present at residues 54–63; that stretch reads PTGTDIHIGH. The 'KMSKS' region motif lies at 248–252; that stretch reads KMSKS. Lys251 serves as a coordination point for ATP. The 65-residue stretch at 351–415 folds into the S4 RNA-binding domain; it reads AKAFYLFSKM…GKKKFLRVST (65 aa).

The protein belongs to the class-I aminoacyl-tRNA synthetase family. TyrS type 2 subfamily. In terms of assembly, homodimer.

The protein localises to the cytoplasm. The enzyme catalyses tRNA(Tyr) + L-tyrosine + ATP = L-tyrosyl-tRNA(Tyr) + AMP + diphosphate + H(+). In terms of biological role, catalyzes the attachment of tyrosine to tRNA(Tyr) in a two-step reaction: tyrosine is first activated by ATP to form Tyr-AMP and then transferred to the acceptor end of tRNA(Tyr). The chain is Tyrosine--tRNA ligase from Prochlorococcus marinus (strain NATL2A).